Consider the following 455-residue polypeptide: Na(+)/H(+) antiporter NhaA (455 aa).

Helical transmembrane passes span 31 to 51 (ASGI…NSPW), 83 to 103 (GLMS…VLIG), 113 to 133 (FPLI…LLCV), 141 to 161 (GWGI…ILLG), 170 to 190 (VFVT…IALF), 198 to 218 (VSLL…LLGI), 231 to 251 (IWAA…LLAF), 309 to 329 (GLQP…NAGV), 345 to 365 (IGVA…FAWL), 383 to 403 (IFGA…IASL), and 414 to 434 (SKIG…VVLW).

It belongs to the NhaA Na(+)/H(+) (TC 2.A.33) antiporter family.

The protein localises to the cell inner membrane. The catalysed reaction is Na(+)(in) + 2 H(+)(out) = Na(+)(out) + 2 H(+)(in). Na(+)/H(+) antiporter that extrudes sodium in exchange for external protons. In Koribacter versatilis (strain Ellin345), this protein is Na(+)/H(+) antiporter NhaA.